Consider the following 359-residue polypeptide: GTP 3',8-cyclase 1 (359 aa).

The Radical SAM core domain maps to R21–E241. R30 provides a ligand contact to GTP. Residues C37 and C41 each coordinate [4Fe-4S] cluster. S-adenosyl-L-methionine is bound at residue Y43. C44 contacts [4Fe-4S] cluster. Residue R80 coordinates GTP. G84 contributes to the S-adenosyl-L-methionine binding site. Residue T115 coordinates GTP. S-adenosyl-L-methionine is bound at residue S139. Position 176 (K176) interacts with GTP. An S-adenosyl-L-methionine-binding site is contributed by M210. The [4Fe-4S] cluster site is built by C273 and C276. Residue R278–R280 participates in GTP binding. C290 is a binding site for [4Fe-4S] cluster.

Belongs to the radical SAM superfamily. MoaA family. In terms of assembly, monomer and homodimer. [4Fe-4S] cluster serves as cofactor.

The enzyme catalyses GTP + AH2 + S-adenosyl-L-methionine = (8S)-3',8-cyclo-7,8-dihydroguanosine 5'-triphosphate + 5'-deoxyadenosine + L-methionine + A + H(+). The protein operates within cofactor biosynthesis; molybdopterin biosynthesis. Catalyzes the cyclization of GTP to (8S)-3',8-cyclo-7,8-dihydroguanosine 5'-triphosphate. The sequence is that of GTP 3',8-cyclase 1 from Mycobacterium tuberculosis (strain CDC 1551 / Oshkosh).